A 123-amino-acid chain; its full sequence is Small ribosomal subunit protein uS12 (123 aa).

Residue D89 is modified to 3-methylthioaspartic acid.

This sequence belongs to the universal ribosomal protein uS12 family. As to quaternary structure, part of the 30S ribosomal subunit. Contacts proteins S8 and S17. May interact with IF1 in the 30S initiation complex.

In terms of biological role, with S4 and S5 plays an important role in translational accuracy. Its function is as follows. Interacts with and stabilizes bases of the 16S rRNA that are involved in tRNA selection in the A site and with the mRNA backbone. Located at the interface of the 30S and 50S subunits, it traverses the body of the 30S subunit contacting proteins on the other side and probably holding the rRNA structure together. The combined cluster of proteins S8, S12 and S17 appears to hold together the shoulder and platform of the 30S subunit. This chain is Small ribosomal subunit protein uS12, found in Anaeromyxobacter sp. (strain Fw109-5).